Here is a 640-residue protein sequence, read N- to C-terminus: Pleckstrin homology-like domain family B member 3 (640 aa).

Disordered regions lie at residues 1-100 (MGTR…AARR), 162-189 (LEQQ…ERDR), 241-262 (LERE…VPDP), 387-412 (GLQR…RPLS), and 476-504 (REGT…PHPP). Residues 76–90 (PPIAMAATPPASTSS) are compositionally biased toward low complexity. A coiled-coil region spans residues 104–327 (QQLEALTRVA…ERSRLLELNC (224 aa)). Positions 170–189 (QRGRQQREQEQRRLSQERDR) are enriched in basic and acidic residues. The stretch at 454–481 (DIAHMERLLQQAMAERERLLKAREGTRR) forms a coiled coil. The segment covering 495-504 (TAPPTPPHPP) has biased composition (pro residues). The PH domain occupies 532–635 (GCCCRGPLVK…WMDVIVTAAD (104 aa)).

This is Pleckstrin homology-like domain family B member 3 (PHLDB3) from Homo sapiens (Human).